Here is a 265-residue protein sequence, read N- to C-terminus: Upstream stimulatory factor (265 aa).

Positions 1-18 (MDVQDHTLDQGPQDKDKD) are enriched in basic and acidic residues. Disordered regions lie at residues 1 to 21 (MDVQ…DLEE) and 119 to 149 (ASAA…AAGG). A compositionally biased stretch (polar residues) spans 134–144 (GEQQPGITQPS). The bHLH domain maps to 190–245 (RRRATHNEVERRRRDKINNWIVKLSKIIPDCNIDHSKQGQSKGGILTKTCDYIHDL).

As to quaternary structure, efficient DNA binding requires dimerization with another bHLH protein. Binds DNA as a homodimer or a heterodimer. In terms of tissue distribution, enriched in ectodermal tissue.

Its subcellular location is the nucleus. In terms of biological role, may act as a transcription factor which recognizes the CACGTG motif on SPEC gene promoters. This Strongylocentrotus purpuratus (Purple sea urchin) protein is Upstream stimulatory factor.